We begin with the raw amino-acid sequence, 506 residues long: Catalase (506 aa).

Catalysis depends on residues histidine 73 and asparagine 146. Tyrosine 356 is a heme binding site. Positions 504–506 match the Microbody targeting signal motif; that stretch reads SKF.

Belongs to the catalase family. In terms of assembly, homotetramer. Heme is required as a cofactor.

Its subcellular location is the peroxisome matrix. The enzyme catalyses 2 H2O2 = O2 + 2 H2O. Functionally, catalyzes the degradation of hydrogen peroxide (H(2)O(2)) generated by peroxisomal oxidases to water and oxygen, thereby protecting cells from the toxic effects of hydrogen peroxide. The protein is Catalase (Cat) of Drosophila melanogaster (Fruit fly).